We begin with the raw amino-acid sequence, 192 residues long: Ribose 1,5-bisphosphate phosphokinase PhnN (192 aa).

It belongs to the ribose 1,5-bisphosphokinase family.

The enzyme catalyses alpha-D-ribose 1,5-bisphosphate + ATP = 5-phospho-alpha-D-ribose 1-diphosphate + ADP. It participates in metabolic intermediate biosynthesis; 5-phospho-alpha-D-ribose 1-diphosphate biosynthesis; 5-phospho-alpha-D-ribose 1-diphosphate from D-ribose 5-phosphate (route II): step 3/3. Functionally, catalyzes the phosphorylation of ribose 1,5-bisphosphate to 5-phospho-D-ribosyl alpha-1-diphosphate (PRPP). This Achromobacter xylosoxidans (strain A8) protein is Ribose 1,5-bisphosphate phosphokinase PhnN.